The following is a 422-amino-acid chain: Enolase (422 aa).

Gln161 contributes to the (2R)-2-phosphoglycerate binding site. The active-site Proton donor is the Glu203. The Mg(2+) site is built by Asp240, Glu283, and Asp310. The (2R)-2-phosphoglycerate site is built by Lys335, Arg364, Ser365, and Lys386. The active-site Proton acceptor is Lys335.

Belongs to the enolase family. Requires Mg(2+) as cofactor.

It localises to the cytoplasm. It is found in the secreted. The protein localises to the cell surface. It carries out the reaction (2R)-2-phosphoglycerate = phosphoenolpyruvate + H2O. The protein operates within carbohydrate degradation; glycolysis; pyruvate from D-glyceraldehyde 3-phosphate: step 4/5. Its function is as follows. Catalyzes the reversible conversion of 2-phosphoglycerate (2-PG) into phosphoenolpyruvate (PEP). It is essential for the degradation of carbohydrates via glycolysis. In Deinococcus radiodurans (strain ATCC 13939 / DSM 20539 / JCM 16871 / CCUG 27074 / LMG 4051 / NBRC 15346 / NCIMB 9279 / VKM B-1422 / R1), this protein is Enolase.